A 279-amino-acid chain; its full sequence is Indole-3-glycerol phosphate synthase (279 aa).

Belongs to the TrpC family.

It carries out the reaction 1-(2-carboxyphenylamino)-1-deoxy-D-ribulose 5-phosphate + H(+) = (1S,2R)-1-C-(indol-3-yl)glycerol 3-phosphate + CO2 + H2O. It functions in the pathway amino-acid biosynthesis; L-tryptophan biosynthesis; L-tryptophan from chorismate: step 4/5. In Ectopseudomonas mendocina (strain ymp) (Pseudomonas mendocina), this protein is Indole-3-glycerol phosphate synthase.